Reading from the N-terminus, the 1058-residue chain is MPIDKDIKKVLIIGSGPIQIGQAAEFDYSGSQACKSLREEGIETVLVNSNPATIQTDMDMADTVYTEPLTPEIVSEIIKKENVDAILPTMGGQTGLNIATGLGDLGLLDGIKVLGSDIQTIKDVEDRDLFGHFMDKLNEPIPKCHAVESVEEAIEAVKDIGYPVIVRPAFTLGGTGGGVAYNEEELIEIATHGLDMSFINQVLIDESVLGWKEFEYEVMRDKEDTCIIVCNMENIDPMGIHTGESVVVAPAQNLNDRDSQALRDASIKIIRALGIQGGCNIQFAVNPETGEYKVIEVNPRVSRSSALASKATGYPIAKISSKIALGMTLDEIKNDITKETPASFEPAIDYVVVKIPRWPFDKFRGINREIGVQMKATGEVMAIGRTFEEAIQKAIRSLDMGHDGFEYVEYTEDDLANPTDERLFQLYSAIKDGMDLDKIQKLTNIDKFFLYKIRNIVNFENEVTEEKLNDADFLRKAKQMGCSNKRLAALSNQTEEYIRNLLNRFNIKQSYKMVDTCAAEFEAKTPYYYSTYDSGNELKSSNKKKIVILGAGPIRIGQGIEFDYCCVHSSLALKDEGIETILINNNPETVSTDYDISDKLFFEPITFEDVMGIIDQEKPDGVIVQFGGQTSINLAVPLANAGVKILGTPYESIDGVEDRELFAKLLNKLHIHQAPYGTANSFEEAREIAERITFPVLVRPSYVIGGRAMEIVYDNNELEKYMKEAVKVSPEHPILVDKFLEDAIELDVDVLCDGEEVFIAGIMEHIEEAGVHSGDSACVIPPQTIPEHILNTIREYSTKLALELDVKGLMNIQYAVKLDEEMVYIIEANPRASRTVPFVSKAIGVPLAKVATWIMTGAKLKDFNLTKEIKIDHVAVKESVFPFLKLPESDTVLGPEMKSTGESIGVDENFGMAFYKSQLAAGMDLPKEGKIFISVKEQDKKKIRPIAEKAANLGFELAATSGTADAAKGVDIEKIKKVSQGSPNIRDAILNKEIDLIINTSEGKQSAQDGYIIRRLAIELGIPYVTTLSGARAALNAIEAVQNNEITVKSLNEHIDGE.

A carboxyphosphate synthetic domain region spans residues M1 to D399. R127, R167, G173, G174, E206, V208, E213, G239, I240, H241, Q282, and E296 together coordinate ATP. Residues G131–L325 enclose the ATP-grasp 1 domain. Residues Q282, E296, and N298 each contribute to the Mg(2+) site. Mn(2+) is bound by residues Q282, E296, and N298. The tract at residues M400–L538 is oligomerization domain. Positions K539–D924 are carbamoyl phosphate synthetic domain. Residues A663–T856 form the ATP-grasp 2 domain. 10 residues coordinate ATP: R699, K738, L740, E745, G770, V771, H772, S773, Q813, and E827. 3 residues coordinate Mg(2+): Q813, E827, and N829. The Mn(2+) site is built by Q813, E827, and N829. Residues M923–E1058 enclose the MGS-like domain. The tract at residues L925–E1058 is allosteric domain.

The protein belongs to the CarB family. As to quaternary structure, composed of two chains; the small (or glutamine) chain promotes the hydrolysis of glutamine to ammonia, which is used by the large (or ammonia) chain to synthesize carbamoyl phosphate. Tetramer of heterodimers (alpha,beta)4. The cofactor is Mg(2+). It depends on Mn(2+) as a cofactor.

The catalysed reaction is hydrogencarbonate + L-glutamine + 2 ATP + H2O = carbamoyl phosphate + L-glutamate + 2 ADP + phosphate + 2 H(+). It carries out the reaction hydrogencarbonate + NH4(+) + 2 ATP = carbamoyl phosphate + 2 ADP + phosphate + 2 H(+). The protein operates within amino-acid biosynthesis; L-arginine biosynthesis; carbamoyl phosphate from bicarbonate: step 1/1. It participates in pyrimidine metabolism; UMP biosynthesis via de novo pathway; (S)-dihydroorotate from bicarbonate: step 1/3. Large subunit of the glutamine-dependent carbamoyl phosphate synthetase (CPSase). CPSase catalyzes the formation of carbamoyl phosphate from the ammonia moiety of glutamine, carbonate, and phosphate donated by ATP, constituting the first step of 2 biosynthetic pathways, one leading to arginine and/or urea and the other to pyrimidine nucleotides. The large subunit (synthetase) binds the substrates ammonia (free or transferred from glutamine from the small subunit), hydrogencarbonate and ATP and carries out an ATP-coupled ligase reaction, activating hydrogencarbonate by forming carboxy phosphate which reacts with ammonia to form carbamoyl phosphate. This Methanobrevibacter smithii (strain ATCC 35061 / DSM 861 / OCM 144 / PS) protein is Carbamoyl phosphate synthase large chain.